The chain runs to 317 residues: Protease HtpX homolog (317 aa).

The next 2 helical transmembrane spans lie at Thr-6–Gly-26 and Gly-28–Ser-48. His-130 contributes to the Zn(2+) binding site. Glu-131 is a catalytic residue. His-134 is a Zn(2+) binding site. The next 2 helical transmembrane spans lie at Met-145 to Gly-165 and Pro-173 to Val-193. Residue Glu-202 coordinates Zn(2+). The tract at residues Gly-283 to Gly-317 is disordered. Pro residues predominate over residues Gly-290–Gly-300. Positions Asp-306–Gly-317 are enriched in gly residues.

The protein belongs to the peptidase M48B family. It depends on Zn(2+) as a cofactor.

Its subcellular location is the cell inner membrane. The protein is Protease HtpX homolog of Xanthobacter autotrophicus (strain ATCC BAA-1158 / Py2).